The primary structure comprises 414 residues: L-cysteine:1D-myo-inositol 2-amino-2-deoxy-alpha-D-glucopyranoside ligase (414 aa).

Cys43 is a Zn(2+) binding site. L-cysteinyl-5'-AMP is bound by residues 43 to 46, Thr58, and 81 to 83; these read CGIT and NIT. The 'HIGH' region signature appears at 45–55; it reads ITPYDATHLGH. Positions 189–194 match the 'ERGGDP' region motif; it reads ERGGDP. Trp229 is an L-cysteinyl-5'-AMP binding site. Cys233 provides a ligand contact to Zn(2+). 251-253 serves as a coordination point for L-cysteinyl-5'-AMP; it reads GSD. His258 lines the Zn(2+) pocket. L-cysteinyl-5'-AMP is bound at residue Ile285. A 'KMSKS' region motif is present at residues 291–295; that stretch reads KMSKS.

This sequence belongs to the class-I aminoacyl-tRNA synthetase family. MshC subfamily. In terms of assembly, monomer. Zn(2+) is required as a cofactor.

It carries out the reaction 1D-myo-inositol 2-amino-2-deoxy-alpha-D-glucopyranoside + L-cysteine + ATP = 1D-myo-inositol 2-(L-cysteinylamino)-2-deoxy-alpha-D-glucopyranoside + AMP + diphosphate + H(+). Its function is as follows. Catalyzes the ATP-dependent condensation of GlcN-Ins and L-cysteine to form L-Cys-GlcN-Ins. The sequence is that of L-cysteine:1D-myo-inositol 2-amino-2-deoxy-alpha-D-glucopyranoside ligase (mshC) from Mycobacterium bovis (strain ATCC BAA-935 / AF2122/97).